The primary structure comprises 223 residues: GTP cyclohydrolase 1 (223 aa).

C111, H114, and C182 together coordinate Zn(2+).

The protein belongs to the GTP cyclohydrolase I family. Homomer.

It catalyses the reaction GTP + H2O = 7,8-dihydroneopterin 3'-triphosphate + formate + H(+). The protein operates within cofactor biosynthesis; 7,8-dihydroneopterin triphosphate biosynthesis; 7,8-dihydroneopterin triphosphate from GTP: step 1/1. This is GTP cyclohydrolase 1 from Flavobacterium johnsoniae (strain ATCC 17061 / DSM 2064 / JCM 8514 / BCRC 14874 / CCUG 350202 / NBRC 14942 / NCIMB 11054 / UW101) (Cytophaga johnsonae).